We begin with the raw amino-acid sequence, 266 residues long: Energy-coupling factor transporter transmembrane protein EcfT (266 aa).

5 helical membrane-spanning segments follow: residues 32–52 (IIVVFLANNIWSYAILIAFTV), 71–91 (PLLWLIVFTVVLQLLFSPAGG), 107–127 (LINAGYIFVRFLLIIMMSTLL), 152–172 (VPVDTLAMMLSIALRFVPTLM), and 246–266 (DTVTWLLFLLGFVAILIFRHW).

This sequence belongs to the energy-coupling factor EcfT family. As to quaternary structure, forms a stable energy-coupling factor (ECF) transporter complex composed of 2 membrane-embedded substrate-binding proteins (S component), 2 ATP-binding proteins (A component) and 2 transmembrane proteins (T component). May be able to interact with more than 1 S component at a time.

Its subcellular location is the cell membrane. Functionally, transmembrane (T) component of an energy-coupling factor (ECF) ABC-transporter complex. Unlike classic ABC transporters this ECF transporter provides the energy necessary to transport a number of different substrates. This is Energy-coupling factor transporter transmembrane protein EcfT from Levilactobacillus brevis (strain ATCC 367 / BCRC 12310 / CIP 105137 / JCM 1170 / LMG 11437 / NCIMB 947 / NCTC 947) (Lactobacillus brevis).